We begin with the raw amino-acid sequence, 108 residues long: Histone H4 (108 aa).

Residues 1 to 36 (MSSAQSRGGKTGGKVGGKVGAKRHKKTQKEHINGIT) are disordered. A compositionally biased stretch (gly residues) spans 9-19 (GKTGGKVGGKV).

Belongs to the histone H4 family. The nucleosome is a histone octamer containing two molecules each of H2A, H2B, H3 and H4 assembled in one H3-H4 heterotetramer and two H2A-H2B heterodimers. The octamer wraps approximately 147 bp of DNA.

The protein resides in the nucleus. The protein localises to the chromosome. Functionally, core component of nucleosome. Nucleosomes wrap and compact DNA into chromatin, limiting DNA accessibility to the cellular machineries which require DNA as a template. Histones thereby play a central role in transcription regulation, DNA repair, DNA replication and chromosomal stability. DNA accessibility is regulated via a complex set of post-translational modifications of histones, also called histone code, and nucleosome remodeling. In Dictyostelium discoideum (Social amoeba), this protein is Histone H4 (H4a).